A 162-amino-acid polypeptide reads, in one-letter code: Transcription elongation factor GreA (162 aa).

Positions 50–75 (YHAAREEQGHLESRIRQLQELLRTAK) form a coiled coil.

Belongs to the GreA/GreB family.

In terms of biological role, necessary for efficient RNA polymerase transcription elongation past template-encoded arresting sites. The arresting sites in DNA have the property of trapping a certain fraction of elongating RNA polymerases that pass through, resulting in locked ternary complexes. Cleavage of the nascent transcript by cleavage factors such as GreA or GreB allows the resumption of elongation from the new 3'terminus. GreA releases sequences of 2 to 3 nucleotides. The chain is Transcription elongation factor GreA from Saccharopolyspora erythraea (strain ATCC 11635 / DSM 40517 / JCM 4748 / NBRC 13426 / NCIMB 8594 / NRRL 2338).